Here is a 545-residue protein sequence, read N- to C-terminus: Chaperonin GroEL 1 (545 aa).

Residues 30–33 (TLGP), Lys-51, 87–91 (DGTTT), Gly-415, and Asp-495 contribute to the ATP site.

Belongs to the chaperonin (HSP60) family. As to quaternary structure, forms a cylinder of 14 subunits composed of two heptameric rings stacked back-to-back. Interacts with the co-chaperonin GroES.

It is found in the cytoplasm. It carries out the reaction ATP + H2O + a folded polypeptide = ADP + phosphate + an unfolded polypeptide.. Its function is as follows. Together with its co-chaperonin GroES, plays an essential role in assisting protein folding. The GroEL-GroES system forms a nano-cage that allows encapsulation of the non-native substrate proteins and provides a physical environment optimized to promote and accelerate protein folding. The protein is Chaperonin GroEL 1 of Rhizobium meliloti (strain 1021) (Ensifer meliloti).